Reading from the N-terminus, the 245-residue chain is Uridylate kinase (245 aa).

12–15 provides a ligand contact to ATP; the sequence is KISG. UMP is bound at residue Gly-55. ATP contacts are provided by Gly-56 and Arg-60. Residues Asp-76 and 137–144 each bind UMP; that span reads AGAPYLTT. ATP-binding residues include Thr-164, Tyr-171, and Asp-174.

This sequence belongs to the UMP kinase family. As to quaternary structure, homohexamer.

The protein localises to the cytoplasm. The catalysed reaction is UMP + ATP = UDP + ADP. It participates in pyrimidine metabolism; CTP biosynthesis via de novo pathway; UDP from UMP (UMPK route): step 1/1. Its activity is regulated as follows. Inhibited by UTP. Functionally, catalyzes the reversible phosphorylation of UMP to UDP. The sequence is that of Uridylate kinase from Chlamydia muridarum (strain MoPn / Nigg).